The sequence spans 112 residues: Cytochrome c 2.1 (112 aa).

Cys20, Cys23, His24, and Met85 together coordinate heme c.

This sequence belongs to the cytochrome c family. Binds 1 heme c group covalently per subunit.

The protein localises to the mitochondrion intermembrane space. In terms of biological role, electron carrier protein. The oxidized form of the cytochrome c heme group can accept an electron from the heme group of the cytochrome c1 subunit of cytochrome reductase. Cytochrome c then transfers this electron to the cytochrome oxidase complex, the final protein carrier in the mitochondrial electron-transport chain. This is Cytochrome c 2.1 from Caenorhabditis briggsae.